A 262-amino-acid chain; its full sequence is Zinc-finger homeodomain protein 6 (262 aa).

Basic and acidic residues-rich tracts occupy residues 1–25 (MEVREKKDEKMEMTRRKSSALDHHR) and 36–47 (NKEKPTTKRNGS). Positions 1–93 (MEVREKKDEK…ECQKNHAASS (93 aa)) are disordered. The segment at 82-131 (YRECQKNHAASSGGHVVDGCGEFMSSGEEGTVESLLCAACDCHRSFHRKE) adopts a ZF-HD dimerization-type; degenerate zinc-finger fold. Residues 198–261 (KKRFRTKFNE…NNKQAAKKKD (64 aa)) constitute a DNA-binding region (homeobox).

Homo- and heterodimer with other ZFHD proteins. Interacts with MIF1 and MIF3; these interactions prevent nuclear localization and DNA-binding to inhibit transcription regulation activity. Binds to ZHD1, ZHD2, ZHD10 and ZHD11. As to expression, expressed in seedlings, roots, leaves, stems, flowers and inflorescence.

The protein localises to the nucleus. In terms of biological role, putative transcription factor. This chain is Zinc-finger homeodomain protein 6 (ZHD6), found in Arabidopsis thaliana (Mouse-ear cress).